Reading from the N-terminus, the 658-residue chain is Transmembrane 9 superfamily member 11 (658 aa).

A signal peptide spans 1–23; sequence MRSMDRFGIWVLAILLVIQSSFG. Over 24–291 the chain is Lumenal; it reads FYLPGSYPHK…LKMEGSKVHW (268 aa). Residues 292-312 form a helical membrane-spanning segment; the sequence is FSILNSLMVITFLAGIVLVIF. Residues 313-364 lie on the Cytoplasmic side of the membrane; the sequence is LRTVRRDLTRYEELDKEAQAQMNEELSGWKLVVGDVFRAPSNASLLCVMVGD. Residues 365–385 traverse the membrane as a helical segment; the sequence is GVQILGMAVVTILFAALGFMS. At 386-391 the chain is on the lumenal side; that stretch reads PASRGT. Residues 392–412 form a helical membrane-spanning segment; it reads LITGMLFFYMILGIAAGYVSV. Residues 413–432 lie on the Cytoplasmic side of the membrane; it reads RLWRTIGCGEHRGWMSVAWK. Residues 433-453 form a helical membrane-spanning segment; it reads AACFFPGIAFLILTTLNFLLW. Over 454-462 the chain is Lumenal; the sequence is GSHSTGAIP. The chain crosses the membrane as a helical span at residues 463–483; that stretch reads FSLFVILLLLWFCISVPLTLI. The Cytoplasmic portion of the chain corresponds to 484 to 515; sequence GGYFGAKAPHIEFPVRTNQIPREIPAQKYPSW. A helical transmembrane segment spans residues 516–536; it reads LLVLGAGTLPFGTLFIELFFI. The Lumenal portion of the chain corresponds to 537–547; it reads MSSIWMGRVYY. A helical transmembrane segment spans residues 548–568; that stretch reads VFGFLFVVLILLVVVCAEVSL. Residues 569-586 are Cytoplasmic-facing; that stretch reads VLTYMHLCVEDYKWWWKS. Residues 587 to 607 form a helical membrane-spanning segment; that stretch reads FFASGSVAIYIFIYSINYLVF. The Lumenal portion of the chain corresponds to 608 to 619; the sequence is DLKSLSGPVSAT. Residues 620–640 traverse the membrane as a helical segment; that stretch reads LYLGYSLFMVLAIMLATGTVG. The Cytoplasmic portion of the chain corresponds to 641-658; sequence FLSSFWFVHYLFSSVKLD. Positions 647-652 match the Endoplasmic reticulum export signal motif; it reads FVHYLF. A Golgi retention signal motif is present at residues 656–658; it reads KLD.

This sequence belongs to the nonaspanin (TM9SF) (TC 9.A.2) family.

Its subcellular location is the endosome membrane. The protein localises to the golgi apparatus membrane. This is Transmembrane 9 superfamily member 11 from Arabidopsis thaliana (Mouse-ear cress).